Consider the following 120-residue polypeptide: Small ribosomal subunit protein bS16 (120 aa).

Positions 84–120 are disordered; it reads KRESRNNPQQGQPKKKAQERAAAAAAAAEKAASEAAA. Low complexity predominate over residues 103–120; it reads RAAAAAAAAEKAASEAAA.

It belongs to the bacterial ribosomal protein bS16 family.

In Beijerinckia indica subsp. indica (strain ATCC 9039 / DSM 1715 / NCIMB 8712), this protein is Small ribosomal subunit protein bS16.